We begin with the raw amino-acid sequence, 253 residues long: DNA repair protein RecO (253 aa).

It belongs to the RecO family.

Its function is as follows. Involved in DNA repair and RecF pathway recombination. The protein is DNA repair protein RecO of Streptococcus agalactiae serotype III (strain NEM316).